Reading from the N-terminus, the 168-residue chain is Phosphopantetheine adenylyltransferase (168 aa).

Threonine 17 contributes to the substrate binding site. ATP is bound by residues 17–18 (TF) and histidine 25. Substrate is bound by residues lysine 49, leucine 81, and arginine 95. ATP is bound by residues 96–98 (GLR), glutamate 106, and 131–137 (LMYISST).

The protein belongs to the bacterial CoaD family. In terms of assembly, homohexamer. It depends on Mg(2+) as a cofactor.

It localises to the cytoplasm. The catalysed reaction is (R)-4'-phosphopantetheine + ATP + H(+) = 3'-dephospho-CoA + diphosphate. It participates in cofactor biosynthesis; coenzyme A biosynthesis; CoA from (R)-pantothenate: step 4/5. Its function is as follows. Reversibly transfers an adenylyl group from ATP to 4'-phosphopantetheine, yielding dephospho-CoA (dPCoA) and pyrophosphate. This Legionella pneumophila (strain Paris) protein is Phosphopantetheine adenylyltransferase.